Consider the following 277-residue polypeptide: 14-3-3 protein (277 aa).

Residues 252 to 277 (LQTQEQQQQPVGEGAEAPKVEATEQQ) are disordered. Over residues 267 to 277 (EAPKVEATEQQ) the composition is skewed to basic and acidic residues.

This sequence belongs to the 14-3-3 family.

In Eimeria tenella (Coccidian parasite), this protein is 14-3-3 protein.